Reading from the N-terminus, the 215-residue chain is Nuclear autoantigen Sp-100 (215 aa).

In terms of domain architecture, SAND spans 1-31 (EGDRGASKNWKLSIRCGGYTLKVLTENKFLP). DNA-binding regions (HMG box) lie at residues 32–108 (EPPS…KTYI) and 124–192 (PKRP…AACR). The Nuclear localization signal signature appears at 72 to 89 (KKRSEMWKTIFAKEKGKF). 2 disordered regions span residues 104–124 (MKTY…PNAP) and 193–215 (AKGK…KKKE).

Homodimer. Interacts with members of the HP1 family of nonhistone chromosomal protein, such as CBX5 and CBX3 via the PxVxL motif. Interacts with ETS1; the interaction is direct and modulates ETS1 transcriptional activity. Interacts with the MRN complex which is composed of two heterodimers RAD50/MRE11 associated with a single NBN; recruits the complex to PML-related bodies. Interacts with HIPK2; positively regulates TP53-dependent transcription. Interacts with CASP8AP2; may negatively regulate CASP8AP2 export from the nucleus to the cytoplasm. Post-translationally, phosphorylated. In terms of processing, sumoylated. Sumoylated with SUMO1. Sumoylation depends on a functional nuclear localization signal but is not necessary for nuclear import or nuclear body targeting. Sumoylation may stabilize the interaction with CBX5.

It localises to the nucleus. It is found in the PML body. Its subcellular location is the nuclear body. The protein resides in the cytoplasm. Functionally, together with PML, this tumor suppressor is a major constituent of the PML bodies, a subnuclear organelle involved in a large number of physiological processes including cell growth, differentiation and apoptosis. Functions as a transcriptional coactivator of ETS1 and ETS2. Under certain conditions, it may also act as a corepressor of ETS1 preventing its binding to DNA. Through the regulation of ETS1 it may play a role in angiogenesis, controlling endothelial cell motility and invasion. Through interaction with the MRN complex it may be involved in the regulation of telomeres lengthening. May also regulate TP53-mediated transcription and through CASP8AP2, regulate FAS-mediated apoptosis. May also play a role in infection by viruses through mechanisms that may involve chromatin and/or transcriptional regulation. In Pan troglodytes (Chimpanzee), this protein is Nuclear autoantigen Sp-100 (SP100).